Reading from the N-terminus, the 261-residue chain is Cytochrome c oxidase subunit 3 (261 aa).

Topologically, residues 1-15 (MAHQAHAYHMVDPSP) are mitochondrial matrix. Residues 16–34 (WPLTGAVAALLLTSGLAIW) form a helical membrane-spanning segment. Topologically, residues 35–40 (FPFNSL) are mitochondrial intermembrane. The chain crosses the membrane as a helical span at residues 41–66 (ILLTLGLVLLLLTMYQWWRDIVREGT). Over 67–72 (FQGHHT) the chain is Mitochondrial matrix. The helical transmembrane segment at 73–105 (PPVQKGLRYGMILFITSEVFFFLGFFWAFYHSS) threads the bilayer. The Mitochondrial intermembrane portion of the chain corresponds to 106-128 (LAPTPELGGCWPPTGIVPLNPFE). Residues 129-152 (VPLLNTAVLLASGVTVTWAHHSIM) traverse the membrane as a helical segment. The Mitochondrial matrix portion of the chain corresponds to 153–155 (EGE). The chain crosses the membrane as a helical span at residues 156–183 (RKQAIHSLTLTILLGFYFTFLQAMEYYE). Residues 184–190 (APFTIAD) lie on the Mitochondrial intermembrane side of the membrane. The chain crosses the membrane as a helical span at residues 191-223 (GVYGSTFFVATGFHGLHVIIGSTFLAICLLRQI). Over 224-232 (RYHFTSEHH) the chain is Mitochondrial matrix. The chain crosses the membrane as a helical span at residues 233–256 (FGFEAAAWYWHFVDVVWLFLYISI). Over 257 to 261 (YWWGS) the chain is Mitochondrial intermembrane.

The protein belongs to the cytochrome c oxidase subunit 3 family. As to quaternary structure, component of the cytochrome c oxidase (complex IV, CIV), a multisubunit enzyme composed of 14 subunits. The complex is composed of a catalytic core of 3 subunits MT-CO1, MT-CO2 and MT-CO3, encoded in the mitochondrial DNA, and 11 supernumerary subunits COX4I, COX5A, COX5B, COX6A, COX6B, COX6C, COX7A, COX7B, COX7C, COX8 and NDUFA4, which are encoded in the nuclear genome. The complex exists as a monomer or a dimer and forms supercomplexes (SCs) in the inner mitochondrial membrane with NADH-ubiquinone oxidoreductase (complex I, CI) and ubiquinol-cytochrome c oxidoreductase (cytochrome b-c1 complex, complex III, CIII), resulting in different assemblies (supercomplex SCI(1)III(2)IV(1) and megacomplex MCI(2)III(2)IV(2)).

Its subcellular location is the mitochondrion inner membrane. The catalysed reaction is 4 Fe(II)-[cytochrome c] + O2 + 8 H(+)(in) = 4 Fe(III)-[cytochrome c] + 2 H2O + 4 H(+)(out). In terms of biological role, component of the cytochrome c oxidase, the last enzyme in the mitochondrial electron transport chain which drives oxidative phosphorylation. The respiratory chain contains 3 multisubunit complexes succinate dehydrogenase (complex II, CII), ubiquinol-cytochrome c oxidoreductase (cytochrome b-c1 complex, complex III, CIII) and cytochrome c oxidase (complex IV, CIV), that cooperate to transfer electrons derived from NADH and succinate to molecular oxygen, creating an electrochemical gradient over the inner membrane that drives transmembrane transport and the ATP synthase. Cytochrome c oxidase is the component of the respiratory chain that catalyzes the reduction of oxygen to water. Electrons originating from reduced cytochrome c in the intermembrane space (IMS) are transferred via the dinuclear copper A center (CU(A)) of subunit 2 and heme A of subunit 1 to the active site in subunit 1, a binuclear center (BNC) formed by heme A3 and copper B (CU(B)). The BNC reduces molecular oxygen to 2 water molecules using 4 electrons from cytochrome c in the IMS and 4 protons from the mitochondrial matrix. The protein is Cytochrome c oxidase subunit 3 (mt-co3) of Tetraodon nigroviridis (Spotted green pufferfish).